Here is a 346-residue protein sequence, read N- to C-terminus: MTNKTSLSYKDAGVDIDAGNALVNRIKGVVKQTRRPEVMGGLGGFGALCALPQKYREPILVSGTDGVGTKLRLAMDLKRHDTIGIDLVAMCVNDLVVQGAEPLFFLDYYATGKLDVDTAASVISGIAEGCQLSGCALVGGETAEMPGMYHGEDYDVAGFCVGVVEKSEIIDGSKVQAGDALIALAASGPHSNGYSLIRKILAVSNTDPEATELESKSLADHLLAPTKIYVKSLLSLIEQVDIHAIAHLTGGGFWENIPRVLPENTQAQINESSWQWPAIFNWLQQTGNVSRHEMYRTFNCGVGMVIALPPTAVEQAIELLTAAGEKAWQIGTIATLKEGEQQVVIQ.

Belongs to the AIR synthase family.

Its subcellular location is the cytoplasm. It catalyses the reaction 2-formamido-N(1)-(5-O-phospho-beta-D-ribosyl)acetamidine + ATP = 5-amino-1-(5-phospho-beta-D-ribosyl)imidazole + ADP + phosphate + H(+). It functions in the pathway purine metabolism; IMP biosynthesis via de novo pathway; 5-amino-1-(5-phospho-D-ribosyl)imidazole from N(2)-formyl-N(1)-(5-phospho-D-ribosyl)glycinamide: step 2/2. This chain is Phosphoribosylformylglycinamidine cyclo-ligase, found in Photorhabdus laumondii subsp. laumondii (strain DSM 15139 / CIP 105565 / TT01) (Photorhabdus luminescens subsp. laumondii).